The chain runs to 436 residues: GTPase Obg (436 aa).

The 159-residue stretch at 1–159 (MAFVDQATIE…LKVKLELRVL (159 aa)) folds into the Obg domain. Residues 160–335 (ADVGLVGFPS…LLLKVADLLD (176 aa)) form the OBG-type G domain. Residues 166 to 173 (GFPSAGKS), 191 to 195 (FTTID), 213 to 216 (DLPG), 285 to 288 (TKMD), and 316 to 318 (SSV) each bind GTP. Residues serine 173 and threonine 193 each coordinate Mg(2+). The OCT domain occupies 357-436 (KDDHQSTDFQ…GADFAFEFEE (80 aa)).

It belongs to the TRAFAC class OBG-HflX-like GTPase superfamily. OBG GTPase family. In terms of assembly, monomer. The cofactor is Mg(2+).

Its subcellular location is the cytoplasm. In terms of biological role, an essential GTPase which binds GTP, GDP and possibly (p)ppGpp with moderate affinity, with high nucleotide exchange rates and a fairly low GTP hydrolysis rate. Plays a role in control of the cell cycle, stress response, ribosome biogenesis and in those bacteria that undergo differentiation, in morphogenesis control. The polypeptide is GTPase Obg (Oenococcus oeni (strain ATCC BAA-331 / PSU-1)).